A 497-amino-acid chain; its full sequence is Galactose/methyl galactoside import ATP-binding protein MglA (497 aa).

ABC transporter domains follow at residues leucine 6 to serine 241 and valine 252 to leucine 497. Glycine 38–serine 45 is an ATP binding site.

This sequence belongs to the ABC transporter superfamily. Galactose/methyl galactoside importer (TC 3.A.1.2.3) family. As to quaternary structure, the complex is composed of one ATP-binding protein (MglA), two transmembrane proteins (MglC) and a solute-binding protein (MglB).

Its subcellular location is the cell inner membrane. The catalysed reaction is D-galactose(out) + ATP + H2O = D-galactose(in) + ADP + phosphate + H(+). It carries out the reaction methyl beta-D-galactoside(out) + ATP + H2O = methyl beta-D-galactoside(in) + ADP + phosphate + H(+). Functionally, part of the ABC transporter complex MglABC involved in galactose/methyl galactoside import. Responsible for energy coupling to the transport system. In Treponema denticola (strain ATCC 35405 / DSM 14222 / CIP 103919 / JCM 8153 / KCTC 15104), this protein is Galactose/methyl galactoside import ATP-binding protein MglA.